The primary structure comprises 55 residues: Small ribosomal subunit protein uS14 (55 aa).

Residues 1-20 form a disordered region; the sequence is MSFEPSGPHSHRKPFGKGSR. Zn(2+) contacts are provided by C22, C25, C38, and C41.

Belongs to the universal ribosomal protein uS14 family. Zn(2+) serves as cofactor.

This Encephalitozoon cuniculi (strain GB-M1) (Microsporidian parasite) protein is Small ribosomal subunit protein uS14 (RPS29).